We begin with the raw amino-acid sequence, 318 residues long: Transcription factor MYBS3 (318 aa).

Disordered stretches follow at residues 1–20 (MTRR…TCPN) and 50–98 (AAGS…PWTE). Residues 3–20 (RRCSHCSHNGHNSRTCPN) form a CCHC-type zinc finger. A compositionally biased stretch (polar residues) spans 8 to 18 (CSHNGHNSRTC). Over residues 50–77 (AAGSTSGGASPADGPDAAPTAADGYASD) the composition is skewed to low complexity. Positions 88-144 (RDRKKGVPWTEEEHRRFLLGLQKLGKGDWRGISRNFVVSRTPTQVASHAQKYFIRQS) constitute an HTH myb-type domain. The segment at residues 116–140 (WRGISRNFVVSRTPTQVASHAQKYF) is a DNA-binding region (H-T-H motif). The segment at 159–200 (VPDESMDLPPLPGGQEPETQVLNQPALPPPREEEEVDSMESD) is disordered.

As to expression, expressed in all tissues, with the highest level in senescent leaves.

Its subcellular location is the nucleus. In terms of biological role, transcription repressor that binds to 5'-TATCCA-3' elements in gene promoters. Contributes to the sugar-repressed transcription of promoters containing SRS or 5'-TATCCA-3' elements. Transcription repressor involved in a cold stress response pathway that confers cold tolerance. Suppresses the DREB1-dependent signaling pathway under prolonged cold stress. DREB1 responds quickly and transiently while MYBS3 responds slowly to cold stress. They may act sequentially and complementarily for adaptation to short- and long-term cold stress. This Oryza sativa subsp. japonica (Rice) protein is Transcription factor MYBS3.